The following is a 434-amino-acid chain: Tryptamine hydroxycinnamoyltransferase 2 (434 aa).

Catalysis depends on proton acceptor residues H154 and D380.

It belongs to the plant acyltransferase family.

Its function is as follows. Hydroxycinnamoyl transferase that catalyzes the transfer of an acyl from p-coumaryol-CoA to tryptamine, to produce coumaroyl tryptamine. Serotonin and tyramine serve as acyl acceptors in vitro. Can use caffeoyl-CoA, and to a lesser extent feruloyl-CoA, as acyl donors. This Oryza sativa subsp. japonica (Rice) protein is Tryptamine hydroxycinnamoyltransferase 2.